A 1938-amino-acid chain; its full sequence is Myosin-1 (1938 aa).

Residues 33-82 (DAKTSVFVADPKESFVKATVQSREGGKVTAKTEAGATVTVKEDQVFPMNP) form the Myosin N-terminal SH3-like domain. Residues threonine 64 and threonine 69 each carry the phosphothreonine modification. The region spanning 86-781 (DKIEDMAMMT…LLGLLEEMRD (696 aa)) is the Myosin motor domain. Residue lysine 130 is modified to N6,N6,N6-trimethyllysine. Residue 179–186 (GESGAGKT) participates in ATP binding. Phosphotyrosine is present on tyrosine 389. Phosphothreonine is present on threonine 419. Tyrosine 424 is subject to Phosphotyrosine. At serine 625 the chain carries Phosphoserine. The actin-binding stretch occupies residues 658–680 (LNKLMTNLRSTHPHFVRCIIPNE). Pros-methylhistidine is present on histidine 756. An actin-binding region spans residues 760-774 (KFGHTKVFFKAGLLG). The 30-residue stretch at 784–813 (LAQLITRTQARCRGFLARVEYQKMVERRES) folds into the IQ domain. Residues 842–1938 (LLKSAETEKE…EVHTKIISEE (1097 aa)) are a coiled coil. Phosphoserine is present on residues serine 1091 and serine 1095. 2 disordered regions span residues 1124–1146 (EIEA…SREL) and 1152–1171 (RLEE…KKRE). The segment covering 1127–1146 (AERASRAKAEKQRSDLSREL) has biased composition (basic and acidic residues). Phosphoserine occurs at positions 1161 and 1236. Threonine 1240 carries the post-translational modification Phosphothreonine. Residues serine 1242 and serine 1260 each carry the phosphoserine modification. Phosphothreonine is present on residues threonine 1264 and threonine 1285. Phosphoserine is present on residues serine 1287, serine 1291, serine 1302, and serine 1305. Position 1463 is a phosphotyrosine (tyrosine 1463). Threonine 1466 carries the post-translational modification Phosphothreonine. Phosphoserine is present on serine 1473. Tyrosine 1491 bears the Phosphotyrosine mark. Serine 1494 is subject to Phosphoserine. Threonine 1500 carries the post-translational modification Phosphothreonine. Residue serine 1513 is modified to Phosphoserine. Threonine 1516 is subject to Phosphothreonine. Serine 1541, serine 1553, serine 1573, serine 1599, serine 1602, serine 1713, and serine 1725 each carry phosphoserine. Phosphothreonine occurs at positions 1729 and 1735.

This sequence belongs to the TRAFAC class myosin-kinesin ATPase superfamily. Myosin family. Muscle myosin is a hexameric protein that consists of 2 heavy chain subunits (MHC), 2 alkali light chain subunits (MLC) and 2 regulatory light chain subunits (MLC-2). Interacts with SLC26A5.

It is found in the cytoplasm. The protein resides in the myofibril. Its function is as follows. Required for normal hearing. It plays a role in cochlear amplification of auditory stimuli, likely through the positive regulation of prestin (SLC26A5) activity and outer hair cell (OHC) electromotility. The sequence is that of Myosin-1 (MYH1) from Bos taurus (Bovine).